Consider the following 833-residue polypeptide: MTEDVKKADGAAPKKLSLQRRTKTTVSTTAGGKAKEVQVEVRKKRTVPTDAAQKAEEARLKAKQEADRLAAEKAKKDAEEKARLEAEKAKQAKAEEAKKAQAVSAPTKAVDVEKEKRRAEEAELRRKADELARQKAEELARKAAEEAKRYAELSEEDAENENSEDYADYHLTSTYAREAEDEEARRKENRNRGGKNKVAKAKKGGREDESSKTERESNRRNQKDGKMGKGKHAKKGSALQQAFTKPAQAVNRDVVIGETITVAELANKMAVKATEVIKTMMKMGAMATINQVIDQETAQLVAEEMGHKVIIRKENELEESVMSDRDVDAELVTRAPVVTIMGHVDHGKTSLLDYIRKAKVASGEAGGITQHIGAYHVETDGKMITFLDTPGHAAFTSMRARGAKATDIVVLVVAADDGVMPQTIEAIQHAKAAGVPIVVAVNKIDKPEANPERVETELLQHEVVAEKFGGDTQFVYVSAKKGTGVDELLEAILLQSEVLELTAVKDGMATGVVIESYLDKGRGPVATILVQTGTLHRGDIVLCGFEYGRVRAMRNENGKDVASAGPSIPVEVLGLSGVPAAGDEATVVRDEKKAREVALYRQGKFREVKLARQQKAKLENMFTNMAEGDVAELNVIVKADVQGSVEAICQSLNELSTAEVKVKVVGSGVGGITETDATLAAASNAIVLGFNVRADASARRIIESESIDLRYYSIIYELLNEIKAAMSGMLQPEFKQEIIGLAEVRDVFRHPKFGAIAGCMVTEGIVKRNNPIRVLRDNVVIFEGELESLRRFKDDVAEVRNGMECGIGVKNYNDVKVGDQIEVFEVVEIKRTI.

Residues Met-1–Ala-247 form a disordered region. Composition is skewed to basic and acidic residues over residues Gln-53 to Lys-99 and Val-110 to Glu-152. Positions Leu-153–Tyr-166 are enriched in acidic residues. The segment covering Lys-187–Lys-203 has biased composition (basic residues). Residues Gly-204–Met-227 show a composition bias toward basic and acidic residues. One can recognise a tr-type G domain in the interval Thr-333–Thr-502. Positions Gly-342–Thr-349 are G1. Gly-342–Thr-349 is a GTP binding site. The G2 stretch occupies residues Gly-367–His-371. Residues Asp-388 to Gly-391 are G3. GTP contacts are provided by residues Asp-388 to His-392 and Asn-442 to Asp-445. The interval Asn-442–Asp-445 is G4. The interval Ser-478–Lys-480 is G5.

This sequence belongs to the TRAFAC class translation factor GTPase superfamily. Classic translation factor GTPase family. IF-2 subfamily.

The protein localises to the cytoplasm. In terms of biological role, one of the essential components for the initiation of protein synthesis. Protects formylmethionyl-tRNA from spontaneous hydrolysis and promotes its binding to the 30S ribosomal subunits. Also involved in the hydrolysis of GTP during the formation of the 70S ribosomal complex. The polypeptide is Translation initiation factor IF-2 (infB) (Pasteurella multocida (strain Pm70)).